The chain runs to 184 residues: MNEKIKPFEGKMQKSLDSLKEEYVGIRAGRANPHLLDKLRVDYYGTPSAIQAVANVSVPEARVIQIQPWEAKLIKEIEKAIIASDLGLTPSNDGKVIRLVFPELTEERRKDLVKDVKKKAENTKVAVRNVRRDANDAIKKLAKANEISEDEQKQIEDEIQKITDKFITEVDKVMEDKSKEILTV.

It belongs to the RRF family.

The protein resides in the cytoplasm. Its function is as follows. Responsible for the release of ribosomes from messenger RNA at the termination of protein biosynthesis. May increase the efficiency of translation by recycling ribosomes from one round of translation to another. The chain is Ribosome-recycling factor from Lachnoclostridium phytofermentans (strain ATCC 700394 / DSM 18823 / ISDg) (Clostridium phytofermentans).